The primary structure comprises 138 residues: Lactoylglutathione lyase (138 aa).

The 125-residue stretch at 2–126 (RLLHTMLRVG…DGYKIEFIQK (125 aa)) folds into the VOC domain. H5 contributes to the Ni(2+) binding site. R9 lines the substrate pocket. A Ni(2+)-binding site is contributed by E56. Residues N60 and H74 each coordinate substrate. The Ni(2+) site is built by H74 and E122. The Proton donor/acceptor role is filled by E122.

The protein belongs to the glyoxalase I family. Requires Ni(2+) as cofactor.

The catalysed reaction is (R)-S-lactoylglutathione = methylglyoxal + glutathione. It functions in the pathway secondary metabolite metabolism; methylglyoxal degradation; (R)-lactate from methylglyoxal: step 1/2. Catalyzes the conversion of hemimercaptal, formed from methylglyoxal and glutathione, to S-lactoylglutathione. This is Lactoylglutathione lyase (gloA) from Neisseria meningitidis serogroup A / serotype 4A (strain DSM 15465 / Z2491).